A 391-amino-acid polypeptide reads, in one-letter code: MPGNSFGKLFRVTTFGESHGPAVGVVIDGVPAGLPLTVEDIKFELEFRRPGRLYVSGRREKDEPEILSGIFNNRTTGSPIAVIVRNTDVISSFYEEIRYKPRPGHADLPFIMKYGYENWDYRGGGRASARETVGRVIAGAVAKKLLMLADTWIAGHLRSLGPEELNEEVTFEEVLCSKYSPVRASKKVLEEKYEALIKKATQEGDSYGGIAEVITKNPPIGLGEPVFDKMKAELAKAIMSIPAVTGFEYGLGFMVSKMKGSEANDEIIRKDNKIGWKYNYAGGILGGLTNGEDLIVRCAFKPTSSIRKPQKTIDLRNLEETYISVIGRHDPAVAIRGVTVVESMVALTLVDHAMRAGVIPLVKLTEEQGNIVQQRWERYVRSCKPMEESQL.

NADP(+) is bound at residue Arg48. Residues 126–128, Gly286, 301–305, and Arg328 each bind FMN; these read RAS and KPTSS.

It belongs to the chorismate synthase family. FMNH2 is required as a cofactor.

It carries out the reaction 5-O-(1-carboxyvinyl)-3-phosphoshikimate = chorismate + phosphate. It participates in metabolic intermediate biosynthesis; chorismate biosynthesis; chorismate from D-erythrose 4-phosphate and phosphoenolpyruvate: step 7/7. Its function is as follows. Catalyzes the anti-1,4-elimination of the C-3 phosphate and the C-6 proR hydrogen from 5-enolpyruvylshikimate-3-phosphate (EPSP) to yield chorismate, which is the branch point compound that serves as the starting substrate for the three terminal pathways of aromatic amino acid biosynthesis. This reaction introduces a second double bond into the aromatic ring system. This chain is Chorismate synthase, found in Saccharolobus islandicus (strain L.S.2.15 / Lassen #1) (Sulfolobus islandicus).